Here is a 2407-residue protein sequence, read N- to C-terminus: Daf-12-interacting protein 1 (2407 aa).

A compositionally biased stretch (low complexity) spans 90–112; sequence QNSSMASMSSTPSSGQSSSPRNA. Residues 90-152 are disordered; the sequence is QNSSMASMSS…PHLSVQSQQR (63 aa). The 59-residue stretch at 277–335 folds into the RRM domain; it reads CSVHVPHLDRHSPDHYRRRFESYGQVIDVDMVKSNDNKAFAVVQFTNIDDAQKALQDTN. Disordered regions lie at residues 439 to 632, 737 to 767, 785 to 849, 874 to 896, 921 to 986, 993 to 1012, 1025 to 1844, 1858 to 1918, 1932 to 1976, 2077 to 2103, and 2172 to 2200; these read EVAA…LELD, ATDS…TNRL, LCIG…GRPA, PTHD…ETMV, LIAA…PSNA, RSQS…TPVV, SNQP…EDSE, IAQE…VNNH, LQPA…QQSD, EENE…LAAA, and SIQR…VNQN. A compositionally biased stretch (polar residues) spans 443-456; that stretch reads RSSSPTSKSENDQG. Over residues 512-529 the composition is skewed to acidic residues; that stretch reads EDSDEQNDVDEEDDEDVV. 3 stretches are compositionally biased toward basic and acidic residues: residues 530-541, 548-564, and 573-586; these read SEEKRHEPEEGK, GHRD…DSSE, and SHHE…KDSE. Polar residues predominate over residues 587–603; the sequence is AYQSRSFSPLNYQSQSP. Positions 618 to 627 are enriched in low complexity; that stretch reads SPTTSSASSS. Polar residues-rich tracts occupy residues 791 to 826 and 837 to 849; these read TPST…TPRS and SRHN…GRPA. Positions 924-946 are enriched in polar residues; it reads ATSTGTHSVSSSAHSTPRHSISG. Residues 966-978 are compositionally biased toward basic and acidic residues; the sequence is SRPEKVQIRHDTI. The span at 1043–1052 shows a compositional bias: polar residues; it reads SALQNIQNHQ. Positions 1053–1070 are enriched in low complexity; the sequence is PPHSNANSTPSTPSTSTH. Positions 1086–1153 are enriched in basic and acidic residues; sequence KEKEEREREA…KVRKKAEKEK (68 aa). The segment covering 1165–1177 has biased composition (acidic residues); sequence SDESDSDSNDELD. 6 stretches are compositionally biased toward basic and acidic residues: residues 1178–1195, 1218–1227, 1279–1293, 1304–1320, 1335–1355, and 1376–1398; these read LDVR…KDHQ, RAHDSFEKMQ, ADQR…EKGE, NDAG…DREN, QGER…DAAA, and RRSS…PHED. Composition is skewed to low complexity over residues 1456–1471 and 1488–1498; these read PKHL…TKRS and TTSSTSTATTS. The segment covering 1534–1547 has biased composition (polar residues); sequence SMNSAADSPMSTTG. Residues 1570 to 1595 are compositionally biased toward low complexity; the sequence is SSSGQHDSSSGSSSDSSSSDGSTSSD. 2 stretches are compositionally biased toward basic and acidic residues: residues 1679–1691 and 1703–1726; these read SEEH…HGDS and EHQE…HEEQ. The segment covering 1749–1770 has biased composition (polar residues); that stretch reads TQAQEKSAHTLISDQETDQAVQ. The span at 1792–1805 shows a compositional bias: basic and acidic residues; it reads NEKEVSGKDPHNIK. Residues 1809–1826 show a composition bias toward polar residues; it reads PLNNGHTDLLFSPSSSAH. Basic and acidic residues-rich tracts occupy residues 1827–1836 and 1873–1892; these read ASEKQSTKSE and EEVK…KMEE. 2 stretches are compositionally biased toward polar residues: residues 1895 to 1911 and 1932 to 1942; these read EQTP…SQDT and LQPASQHQVAQ. The segment covering 1962-1975 has biased composition (low complexity); the sequence is SQQSQPSPMSSQQS. Residues 2049 to 2110 are a coiled coil; sequence NQMMQAKMKQ…AAATAAATMA (62 aa). The span at 2077 to 2099 shows a compositional bias: basic and acidic residues; the sequence is EENERKVEEDRREKQRKEEERQR. Residues 2176–2186 show a composition bias toward low complexity; sequence PSSTASTSSNP. One can recognise an SPOC domain in the interval 2213-2383; the sequence is QRWFYKHFPM…TRYLLIVFTN (171 aa).

In terms of assembly, isoform d interacts with daf-12. In terms of tissue distribution, isoform d is widely expressed: detected in the hypodermis, seam cells, intestine, somatic gonad, neurons, vulval precursors, body wall muscle and pharynx.

The protein resides in the nucleus. Functionally, probable transcriptional corepressor which modulates activity of the nuclear hormone receptor daf-12 to regulate the dauer diapause. The chain is Daf-12-interacting protein 1 from Caenorhabditis elegans.